The primary structure comprises 130 residues: Small ribosomal subunit protein uS11c (130 aa).

The protein belongs to the universal ribosomal protein uS11 family. As to quaternary structure, part of the 30S ribosomal subunit.

It is found in the plastid. Its subcellular location is the chloroplast. The polypeptide is Small ribosomal subunit protein uS11c (Chlorokybus atmophyticus (Soil alga)).